The sequence spans 218 residues: Small ribosomal subunit protein uS3c (218 aa).

Positions 47–118 (VQNNIRISSG…KLNIAITRIS (72 aa)) constitute a KH type-2 domain.

Belongs to the universal ribosomal protein uS3 family. In terms of assembly, part of the 30S ribosomal subunit.

The protein resides in the plastid. It is found in the chloroplast. This chain is Small ribosomal subunit protein uS3c (rps3), found in Draba nemorosa (Woodland whitlowgrass).